Consider the following 445-residue polypeptide: Tubulin beta chain (445 aa).

GTP-binding residues include Gln-11, Glu-69, Ser-138, Gly-142, Thr-143, Gly-144, Asn-204, and Asn-226. Glu-69 contributes to the Mg(2+) binding site.

This sequence belongs to the tubulin family. Dimer of alpha and beta chains. A typical microtubule is a hollow water-filled tube with an outer diameter of 25 nm and an inner diameter of 15 nM. Alpha-beta heterodimers associate head-to-tail to form protofilaments running lengthwise along the microtubule wall with the beta-tubulin subunit facing the microtubule plus end conferring a structural polarity. Microtubules usually have 13 protofilaments but different protofilament numbers can be found in some organisms and specialized cells. Requires Mg(2+) as cofactor.

It is found in the cytoplasm. The protein localises to the cytoskeleton. In terms of biological role, tubulin is the major constituent of microtubules, a cylinder consisting of laterally associated linear protofilaments composed of alpha- and beta-tubulin heterodimers. Microtubules grow by the addition of GTP-tubulin dimers to the microtubule end, where a stabilizing cap forms. Below the cap, tubulin dimers are in GDP-bound state, owing to GTPase activity of alpha-tubulin. This is Tubulin beta chain from Leishmania mexicana.